Reading from the N-terminus, the 469-residue chain is Properdin (469 aa).

Residues 1–27 (MITEGAQAPRLLLPPLLLLLTLPATGS) form the signal peptide. TSP type-1 domains follow at residues 28 to 76 (DPVL…QPCR), 77 to 134 (SPRW…QCCP), 136 to 191 (MGGW…QSCP), 193 to 255 (HGAW…PPCP), 257 to 313 (AGSW…VPCP), 315 to 377 (DGEW…QHCP), and 379 to 462 (KGSW…PACK). Intrachain disulfides connect Cys-32–Cys-56, Cys-43–Cys-72, and Cys-57–Cys-75. 2 C-linked (Man) tryptophan glycosylation sites follow: Trp-83 and Trp-86. Cystine bridges form between Cys-89/Cys-127, Cys-93/Cys-133, Cys-104/Cys-111, Cys-132/Cys-170, Cys-148/Cys-184, Cys-152/Cys-190, and Cys-163/Cys-174. C-linked (Man) tryptophan glycosylation is found at Trp-139, Trp-142, and Trp-145. The O-linked (Fuc...) threonine glycan is linked to Thr-151. C-linked (Man) tryptophan glycosylation is found at Trp-196, Trp-199, and Trp-202. 3 disulfide bridges follow: Cys-205–Cys-248, Cys-209–Cys-254, and Cys-224–Cys-238. Residue Ser-208 is glycosylated (O-linked (Fuc...) serine). The interval 218-238 (ETRSRKCSAPEPSQKPPGKPC) is disordered. C-linked (Man) tryptophan glycans are attached at residues Trp-260 and Trp-263. Cystine bridges form between Cys-269-Cys-306, Cys-273-Cys-312, and Cys-284-Cys-296. O-linked (Fuc...) threonine glycosylation occurs at Thr-272. Trp-321 and Trp-324 each carry a C-linked (Man) tryptophan glycan. 3 cysteine pairs are disulfide-bonded: Cys-327–Cys-370, Cys-337–Cys-376, and Cys-350–Cys-360. Residues 351-359 (KGRKFDGHR) form an interaction with Complement C3 beta chain region. Residues Trp-382, Trp-385, and Trp-388 are each glycosylated (C-linked (Man) tryptophan). Disulfide bonds link Cys-391–Cys-455, Cys-395–Cys-461, and Cys-407–Cys-439. An N-linked (GlcNAc...) asparagine glycan is attached at Asn-428.

As to quaternary structure, in plasma, properdin exists as dimers, trimers or tetramers in the relative proportions of 26:54:20. Interacts with the pro-C3-convertase enzyme complex (C3b-Bb) comprised of Complement C3 beta chain (C3b) and the Complement factor B Bb fragment (Bb), where it binds (via its TSP type-1 5 domain) with C3b and Bb. This interaction stabilizes the complex and allows it to become the active C3-convertase enzyme complex (C3b-Bb-FP). Interacts with C3b. Interacts with CFB.

It localises to the secreted. Functionally, a positive regulator of the alternate pathway of complement. It binds to and stabilizes the C3- and C5-convertase enzyme complexes. Inhibits CFI-CFH mediated degradation of Inhibits CFI-CFH mediated degradation of Complement C3 beta chain (C3b). This is Properdin (CFP) from Pongo abelii (Sumatran orangutan).